We begin with the raw amino-acid sequence, 350 residues long: Nicotinate-nucleotide--dimethylbenzimidazole phosphoribosyltransferase (350 aa).

Glu316 functions as the Proton acceptor in the catalytic mechanism.

This sequence belongs to the CobT family.

It catalyses the reaction 5,6-dimethylbenzimidazole + nicotinate beta-D-ribonucleotide = alpha-ribazole 5'-phosphate + nicotinate + H(+). It functions in the pathway nucleoside biosynthesis; alpha-ribazole biosynthesis; alpha-ribazole from 5,6-dimethylbenzimidazole: step 1/2. In terms of biological role, catalyzes the synthesis of alpha-ribazole-5'-phosphate from nicotinate mononucleotide (NAMN) and 5,6-dimethylbenzimidazole (DMB). This is Nicotinate-nucleotide--dimethylbenzimidazole phosphoribosyltransferase from Pseudomonas savastanoi pv. phaseolicola (strain 1448A / Race 6) (Pseudomonas syringae pv. phaseolicola (strain 1448A / Race 6)).